The primary structure comprises 338 residues: DNA-directed RNA polymerase subunit alpha (338 aa).

The tract at residues 1–234 (MIQKNWQELI…DQLEIFVNFE (234 aa)) is alpha N-terminal domain (alpha-NTD). The alpha C-terminal domain (alpha-CTD) stretch occupies residues 250–338 (FSPALLKKVD…ELAKRFEEHY (89 aa)).

This sequence belongs to the RNA polymerase alpha chain family. Homodimer. The RNAP catalytic core consists of 2 alpha, 1 beta, 1 beta' and 1 omega subunit. When a sigma factor is associated with the core the holoenzyme is formed, which can initiate transcription.

The catalysed reaction is RNA(n) + a ribonucleoside 5'-triphosphate = RNA(n+1) + diphosphate. Functionally, DNA-dependent RNA polymerase catalyzes the transcription of DNA into RNA using the four ribonucleoside triphosphates as substrates. The chain is DNA-directed RNA polymerase subunit alpha from Xanthobacter autotrophicus (strain ATCC BAA-1158 / Py2).